Reading from the N-terminus, the 574-residue chain is Septation ring formation regulator EzrA (574 aa).

Topologically, residues 1 to 7 (MSSGIIL) are extracellular. A helical membrane pass occupies residues 8–26 (LIVAIVLLVIIAYLIGVII). Residues 27–574 (RKRNDSMIGT…YERTREHIRF (548 aa)) lie on the Cytoplasmic side of the membrane. 3 coiled-coil regions span residues 102–140 (NFIRAKHEINNVESQLNLVEEDITSIREALSILKEQEEK), 243–379 (RRLL…GQEI), and 459–520 (QLEA…SFEA).

The protein belongs to the EzrA family.

It localises to the cell membrane. In terms of biological role, negative regulator of FtsZ ring formation; modulates the frequency and position of FtsZ ring formation. Inhibits FtsZ ring formation at polar sites. Interacts either with FtsZ or with one of its binding partners to promote depolymerization. The chain is Septation ring formation regulator EzrA from Streptococcus uberis (strain ATCC BAA-854 / 0140J).